The sequence spans 179 residues: Stathmin-2 (179 aa).

A membrane attachment region spans residues 1–26 (MAKTAMAYKEKMKELSMLSLICSCFY). Residues S16, S50, S62, S73, S80, and S97 each carry the phosphoserine modification. Residues 38–179 (DDMEVKQINK…NKELQVELSG (142 aa)) enclose the SLD domain. The regulatory/phosphorylation domain stretch occupies residues 39–96 (DMEVKQINKRASGQAFELILKPPSPVSEAPRTLASPKKKELSLEEIQKKLEAAEERRK). Residues 74–179 (PKKKELSLEE…NKELQVELSG (106 aa)) adopt a coiled-coil conformation.

It belongs to the stathmin family. Expression is neuron-specific and found in cerebellum, forebrain, midbrain, tectum and spinal cord.

The protein localises to the cytoplasm. It localises to the perinuclear region. It is found in the cell projection. Its subcellular location is the growth cone. The protein resides in the membrane. The protein localises to the axon. It localises to the lamellipodium. Is a key regulator of neurite extension through regulation of microtubule instabilily. This chain is Stathmin-2 (STMN2), found in Gallus gallus (Chicken).